Reading from the N-terminus, the 316-residue chain is Mannose-6-phosphate isomerase (316 aa).

Positions 95, 97, 114, and 171 each coordinate Zn(2+). R191 is an active-site residue.

The protein belongs to the mannose-6-phosphate isomerase type 1 family. Zn(2+) serves as cofactor.

The catalysed reaction is D-mannose 6-phosphate = D-fructose 6-phosphate. The sequence is that of Mannose-6-phosphate isomerase (pmi) from Streptococcus mutans serotype c (strain ATCC 700610 / UA159).